Consider the following 264-residue polypeptide: Adenosylcobinamide-GDP ribazoletransferase (264 aa).

6 helical membrane-spanning segments follow: residues 39–59 (IAYA…AILI), 63–83 (ALGL…VLLT), 121–141 (ACAL…LLAL), 148–168 (LALI…LEFL), 201–221 (LLIV…LSVL), and 241–261 (VAGA…LIYA).

Belongs to the CobS family. Requires Mg(2+) as cofactor.

The protein resides in the cell inner membrane. The catalysed reaction is alpha-ribazole + adenosylcob(III)inamide-GDP = adenosylcob(III)alamin + GMP + H(+). It catalyses the reaction alpha-ribazole 5'-phosphate + adenosylcob(III)inamide-GDP = adenosylcob(III)alamin 5'-phosphate + GMP + H(+). The protein operates within cofactor biosynthesis; adenosylcobalamin biosynthesis; adenosylcobalamin from cob(II)yrinate a,c-diamide: step 7/7. In terms of biological role, joins adenosylcobinamide-GDP and alpha-ribazole to generate adenosylcobalamin (Ado-cobalamin). Also synthesizes adenosylcobalamin 5'-phosphate from adenosylcobinamide-GDP and alpha-ribazole 5'-phosphate. The polypeptide is Adenosylcobinamide-GDP ribazoletransferase (Azorhizobium caulinodans (strain ATCC 43989 / DSM 5975 / JCM 20966 / LMG 6465 / NBRC 14845 / NCIMB 13405 / ORS 571)).